We begin with the raw amino-acid sequence, 802 residues long: Probable inactive leucine-rich repeat receptor-like protein kinase At3g03770 (802 aa).

An N-terminal signal peptide occupies residues 1–26; it reads MEKLYCGMPLLLLVLLLASIDGSTQL. Over 27–391 the chain is Extracellular; the sequence is QSSQSQTLLR…RNKVSKVGIA (365 aa). Asparagine 52 and asparagine 83 each carry an N-linked (GlcNAc...) asparagine glycan. LRR repeat units lie at residues 71-94, 104-128, 129-152, 153-176, 177-200, 201-225, 227-244, 245-268, 269-293, 294-317, and 319-341; these read EDSVTQLHIIGDNGTHMLPKSFSI, LPDVKVLTFVSLGLWGWLPQKINRL, SSLEILNVSSNFLFGPIPHELSSL, ATLQTLILDENMFSGELPDWIDSL, PSLAVLSLRKNVLNGSLPSSLSSL, SGLRVLALANNRFNGALPDLSHLTN, QVLDLEGNSFGPLFPRLS, NKLVTLILSKNKFRSAVSAEEVSS, LYQLQHLDLSYNTFVGPFPTSLMSL, PAITYLNISHNKLTGRLSANLSCN, and QLMFVDMSSNLLTGSLPTCLKPS. Residue asparagine 135 is glycosylated (N-linked (GlcNAc...) asparagine). N-linked (GlcNAc...) asparagine glycosylation is present at asparagine 190. 2 N-linked (GlcNAc...) asparagine glycosylation sites follow: asparagine 300 and asparagine 313. Residues 392 to 412 form a helical membrane-spanning segment; sequence LGVTASILGVLLLAGALFVVL. Residues 413–802 are Cytoplasmic-facing; that stretch reads RRLNAKKTVT…RDSGCEEHER (390 aa). Positions 477–759 constitute a Protein kinase domain; sequence FESSAFMGEG…FASQVQEGWL (283 aa). The segment at 761–802 is disordered; it reads NSNPSSNLGSPSPAASSLPPPSRLHVTTLESPRDSGCEEHER. Low complexity predominate over residues 762–777; the sequence is SNPSSNLGSPSPAASS. Residues 791 to 802 are compositionally biased toward basic and acidic residues; sequence SPRDSGCEEHER.

Belongs to the protein kinase superfamily. Ser/Thr protein kinase family.

The protein localises to the cell membrane. The chain is Probable inactive leucine-rich repeat receptor-like protein kinase At3g03770 from Arabidopsis thaliana (Mouse-ear cress).